The primary structure comprises 498 residues: ATP synthase subunit alpha 1 (498 aa).

164–171 (GNRQSGKT) is an ATP binding site.

It belongs to the ATPase alpha/beta chains family. As to quaternary structure, F-type ATPases have 2 components, CF(1) - the catalytic core - and CF(0) - the membrane proton channel. CF(1) has five subunits: alpha(3), beta(3), gamma(1), delta(1), epsilon(1). CF(0) has three main subunits: a(1), b(2) and c(9-12). The alpha and beta chains form an alternating ring which encloses part of the gamma chain. CF(1) is attached to CF(0) by a central stalk formed by the gamma and epsilon chains, while a peripheral stalk is formed by the delta and b chains.

The protein resides in the cell membrane. The catalysed reaction is ATP + H2O + 4 H(+)(in) = ADP + phosphate + 5 H(+)(out). Its function is as follows. Produces ATP from ADP in the presence of a proton gradient across the membrane. The alpha chain is a regulatory subunit. In Listeria welshimeri serovar 6b (strain ATCC 35897 / DSM 20650 / CCUG 15529 / CIP 8149 / NCTC 11857 / SLCC 5334 / V8), this protein is ATP synthase subunit alpha 1.